The primary structure comprises 368 residues: High affinity transport system protein p37 (368 aa).

A signal peptide spans 1 to 25; it reads MLFKKFTWVIPSLFLTIISTSLLIS. The N-palmitoyl cysteine moiety is linked to residue C26. C26 carries the S-diacylglycerol cysteine lipid modification.

The protein resides in the cell membrane. In terms of biological role, P37 is part of a high-affinity transport system. The sequence is that of High affinity transport system protein p37 (p37) from Mycoplasma genitalium (strain ATCC 33530 / DSM 19775 / NCTC 10195 / G37) (Mycoplasmoides genitalium).